The sequence spans 94 residues: Selenoprotein K (94 aa).

The chain crosses the membrane as a helical span at residues 20–42; the sequence is LSFITDFFWGIAEFVVLFFRTLL. A disordered region spans residues 48–94; that stretch reads KRRGYGGSSDSRYDDGRGPPGNPPRRMGRINHLRGPNPPPMAGGUGR. Selenocysteine 92 is a non-standard amino acid (selenocysteine).

Belongs to the selenoprotein K family. In terms of assembly, interacts with DERL1, DERL2, DERL3 and SELENOS. The SELENOK-SELENOS complex interacts with VCP. Interacts with ZDHHC6. Cleaved by CAPN2/m-calpain in resting macrophages but not in activated macrophages. Macrophage activation up-regulates expression of the calpain inhibitor CAST/calpastatin, resulting in inhibition of CAPN2 activity. In terms of processing, truncated SELENOK proteins produced by failed UGA/Sec decoding are ubiquitinated by the CRL2(KLHDC2) complex, which recognizes the diglycine (Gly-Gly) at the C-terminus of truncated SELENOK proteins.

Its subcellular location is the endoplasmic reticulum membrane. The protein localises to the cell membrane. Functionally, required for Ca(2+) flux in immune cells and plays a role in T-cell proliferation and in T-cell and neutrophil migration. Involved in endoplasmic reticulum-associated degradation (ERAD) of soluble glycosylated proteins. Required for palmitoylation and cell surface expression of CD36 and involved in macrophage uptake of low-density lipoprotein and in foam cell formation. Together with ZDHHC6, required for palmitoylation of ITPR1 in immune cells, leading to regulate ITPR1 stability and function. Plays a role in protection of cells from ER stress-induced apoptosis. Protects cells from oxidative stress when overexpressed in cardiomyocytes. The protein is Selenoprotein K of Sus scrofa (Pig).